Reading from the N-terminus, the 1103-residue chain is Bifunctional cytochrome P450/NADPH--P450 reductase (1103 aa).

Residues 1–491 (MSTPKAEPVP…SSSEHADHAA (491 aa)) form a cytochrome P450 region. Cys415 serves as a coordination point for heme. The tract at residues 492-1103 (GHGKAGAAKK…KERYTTDIFA (612 aa)) is NADPH--P450 reductase. Residues 508–649 (MHVYYGSNTG…DFDTWGETSF (142 aa)) enclose the Flavodoxin-like domain. Residues 514-519 (SNTGTC), 561-564 (SYEG), Cys596, and Thr604 each bind FMN. Positions 685–924 (LQLQEGLVVE…RPSHTGFKPP (240 aa)) constitute an FAD-binding FR-type domain.

This sequence in the N-terminal section; belongs to the cytochrome P450 family. The cofactor is heme. It depends on FAD as a cofactor. FMN is required as a cofactor.

It carries out the reaction 2 oxidized [cytochrome P450] + NADPH = 2 reduced [cytochrome P450] + NADP(+) + H(+). It catalyses the reaction an organic molecule + reduced [NADPH--hemoprotein reductase] + O2 = an alcohol + oxidized [NADPH--hemoprotein reductase] + H2O + H(+). In terms of biological role, functions as a fatty acid monooxygenase. Also displays a NADPH-dependent reductase activity in the C-terminal domain, which allows electron transfer from NADPH to the heme iron of the cytochrome P450 N-terminal domain. The polypeptide is Bifunctional cytochrome P450/NADPH--P450 reductase (Aspergillus oryzae (strain ATCC 42149 / RIB 40) (Yellow koji mold)).